The following is a 212-amino-acid chain: Golgi SNAP receptor complex member 2 (212 aa).

Residue Met-1 is modified to N-acetylmethionine. At 1–190 (MEPLYQQTHK…LIEKRAFQDK (190 aa)) the chain is on the cytoplasmic side. Residues 61-107 (NRRQNAKLRVDQLKYDVQHLQTALRNFQHRRQAKEQQERQRDELLSR) adopt a coiled-coil conformation. Residues 118-120 (IPM) carry the IxM motif; signal for cargo packaging into COPII-coated vesicles motif. A helical; Anchor for type IV membrane protein transmembrane segment spans residues 191 to 211 (YFMIGGMLLTCAVMFLVVQYL). A topological domain (vesicular) is located at residue Thr-212.

It belongs to the GOSR2 family. In terms of assembly, part of a unique SNARE complex composed of the Golgi SNAREs GOSR1, STX5 and YKT6. Interacts with BET1.

It localises to the golgi apparatus. The protein resides in the cis-Golgi network membrane. The protein localises to the golgi apparatus membrane. It is found in the endoplasmic reticulum membrane. Its function is as follows. Involved in transport of proteins from the cis/medial-Golgi to the trans-Golgi network. This chain is Golgi SNAP receptor complex member 2 (Gosr2), found in Rattus norvegicus (Rat).